The following is a 110-amino-acid chain: Protein SPIRAL1-like 2 (110 aa).

The interval Ala-28–Asn-110 is disordered. The span at Ala-40–Ala-52 shows a compositional bias: low complexity. Polar residues predominate over residues Leu-63 to Phe-82. Ser-67 is subject to Phosphoserine. Positions Pro-95 to Asn-110 are enriched in gly residues.

This sequence belongs to the SPIRAL1 family. In terms of tissue distribution, ubiquitous.

Its function is as follows. Acts redundantly with SPR1 in maintaining the cortical microtubules organization essential for anisotropic cell growth. The polypeptide is Protein SPIRAL1-like 2 (SP1L2) (Arabidopsis thaliana (Mouse-ear cress)).